The following is a 100-amino-acid chain: Large ribosomal subunit protein uL23 (100 aa).

It belongs to the universal ribosomal protein uL23 family. As to quaternary structure, part of the 50S ribosomal subunit. Contacts protein L29, and trigger factor when it is bound to the ribosome.

In terms of biological role, one of the early assembly proteins it binds 23S rRNA. One of the proteins that surrounds the polypeptide exit tunnel on the outside of the ribosome. Forms the main docking site for trigger factor binding to the ribosome. The protein is Large ribosomal subunit protein uL23 of Vibrio campbellii (strain ATCC BAA-1116).